The primary structure comprises 448 residues: Keratin, type I cytoskeletal 27 (448 aa).

Residues 1–73 form a head region; the sequence is MSVRFSSASR…ANEHGLLSGN (73 aa). A coil 1A region spans residues 74-109; sequence EKVTMQNLNDRLASYLENVQALEEANADLEQKIKDW. The region spanning 74 to 389 is the IF rod domain; that stretch reads EKVTMQNLND…RLIDGDEGSC (316 aa). The tract at residues 110–131 is linker 1; it reads YEKFGPGSCRGLDHDYSRYFPI. The tract at residues 132 to 223 is coil 1B; it reads IDDLRTQIIS…KNHEEEMQAL (92 aa). Residues 224 to 246 form a linker 12 region; it reads QCAAGGNVNVEMNAAPGVDLTVL. The interval 247–385 is coil 2; that stretch reads LNNMRAEYEA…ETYCRLIDGD (139 aa). The tail stretch occupies residues 386–448; it reads EGSCVKAKGQ…VNKTEQRIPS (63 aa). The interval 427–448 is disordered; it reads SRVHTLEEKSTKVNKTEQRIPS. Residues 430–448 show a composition bias toward basic and acidic residues; it reads HTLEEKSTKVNKTEQRIPS.

It belongs to the intermediate filament family. As to quaternary structure, heterotetramer of two type I and two type II keratins. Interacts with KRT6A to form filaments. As to expression, expressed in skin. Expressed in the Henle layer and cuticle of the irs in hair follicle bulb. In the hair follicle, expression was observed in all layers of the irs but was stronger in the Henle layer and cuticle than the Huxley layer until the Henle layer differentiated (at protein level).

It is found in the cytoplasm. Its function is as follows. Essential for the proper assembly of type I and type II keratin protein complexes and formation of keratin intermediate filaments in the inner root sheath (irs). In Mus musculus (Mouse), this protein is Keratin, type I cytoskeletal 27.